We begin with the raw amino-acid sequence, 331 residues long: Ketol-acid reductoisomerase (NADP(+)) (331 aa).

The KARI N-terminal Rossmann domain occupies 2–182 (VEIYYDDDAN…GGTRAGALRT (181 aa)). Residues 25–28 (FGSQ), serine 51, and serine 53 contribute to the NADP(+) site. Residue histidine 108 is part of the active site. Residue glycine 134 coordinates NADP(+). The region spanning 183–328 (TFTEETETDL…GKLRPMMSWI (146 aa)) is the KARI C-terminal knotted domain. 4 residues coordinate Mg(2+): aspartate 191, glutamate 195, glutamate 227, and glutamate 231. A substrate-binding site is contributed by serine 252.

It belongs to the ketol-acid reductoisomerase family. It depends on Mg(2+) as a cofactor.

The catalysed reaction is (2R)-2,3-dihydroxy-3-methylbutanoate + NADP(+) = (2S)-2-acetolactate + NADPH + H(+). It carries out the reaction (2R,3R)-2,3-dihydroxy-3-methylpentanoate + NADP(+) = (S)-2-ethyl-2-hydroxy-3-oxobutanoate + NADPH + H(+). It participates in amino-acid biosynthesis; L-isoleucine biosynthesis; L-isoleucine from 2-oxobutanoate: step 2/4. The protein operates within amino-acid biosynthesis; L-valine biosynthesis; L-valine from pyruvate: step 2/4. In terms of biological role, involved in the biosynthesis of branched-chain amino acids (BCAA). Catalyzes an alkyl-migration followed by a ketol-acid reduction of (S)-2-acetolactate (S2AL) to yield (R)-2,3-dihydroxy-isovalerate. In the isomerase reaction, S2AL is rearranged via a Mg-dependent methyl migration to produce 3-hydroxy-3-methyl-2-ketobutyrate (HMKB). In the reductase reaction, this 2-ketoacid undergoes a metal-dependent reduction by NADPH to yield (R)-2,3-dihydroxy-isovalerate. The protein is Ketol-acid reductoisomerase (NADP(+)) of Parafrankia sp. (strain EAN1pec).